A 362-amino-acid chain; its full sequence is Probable RNA methyltransferase Tbd_1951 (362 aa).

Residue Glu-89 is the Proton acceptor of the active site. Residues 92-318 (LLPRDGVCVS…AKLRHSAGQD (227 aa)) form the Radical SAM core domain. Cys-99 and Cys-323 are disulfide-bonded. Residues Cys-106, Cys-110, and Cys-113 each coordinate [4Fe-4S] cluster. Residues 151-152 (GE), Ser-181, 204-206 (SLH), and Asn-280 contribute to the S-adenosyl-L-methionine site. Catalysis depends on Cys-323, which acts as the S-methylcysteine intermediate. The disordered stretch occupies residues 342 to 362 (LPSAETPAASPKAAASIGFPG). Positions 343-362 (PSAETPAASPKAAASIGFPG) are enriched in low complexity.

It belongs to the radical SAM superfamily. RlmN family. It depends on [4Fe-4S] cluster as a cofactor.

Its subcellular location is the cytoplasm. This chain is Probable RNA methyltransferase Tbd_1951, found in Thiobacillus denitrificans (strain ATCC 25259 / T1).